Consider the following 242-residue polypeptide: Guanylate kinase (242 aa).

The Guanylate kinase-like domain occupies 22–200; that stretch reads GLLIVMTGAS…AVRELQAVQR (179 aa). 29-36 serves as a coordination point for ATP; it reads GASGVGKG.

This sequence belongs to the guanylate kinase family.

It localises to the cytoplasm. It catalyses the reaction GMP + ATP = GDP + ADP. Essential for recycling GMP and indirectly, cGMP. The sequence is that of Guanylate kinase from Deinococcus geothermalis (strain DSM 11300 / CIP 105573 / AG-3a).